We begin with the raw amino-acid sequence, 150 residues long: SsrA-binding protein (150 aa).

The tract at residues 129–150 (KRQTLKSKEADREMARALRDRH) is disordered.

Belongs to the SmpB family.

It is found in the cytoplasm. Functionally, required for rescue of stalled ribosomes mediated by trans-translation. Binds to transfer-messenger RNA (tmRNA), required for stable association of tmRNA with ribosomes. tmRNA and SmpB together mimic tRNA shape, replacing the anticodon stem-loop with SmpB. tmRNA is encoded by the ssrA gene; the 2 termini fold to resemble tRNA(Ala) and it encodes a 'tag peptide', a short internal open reading frame. During trans-translation Ala-aminoacylated tmRNA acts like a tRNA, entering the A-site of stalled ribosomes, displacing the stalled mRNA. The ribosome then switches to translate the ORF on the tmRNA; the nascent peptide is terminated with the 'tag peptide' encoded by the tmRNA and targeted for degradation. The ribosome is freed to recommence translation, which seems to be the essential function of trans-translation. The sequence is that of SsrA-binding protein from Syntrophotalea carbinolica (strain DSM 2380 / NBRC 103641 / GraBd1) (Pelobacter carbinolicus).